The chain runs to 347 residues: MSVAGLKKQFHKASQLFSEKISGAEGTKLDEEFLDMEKKIDITSKAVAEILSKATEYLQPNPAYRAKLGMLNTMSKLRGQVKATGYPQTEGLLGDCMLKYGRELGEDSAFGNSLVEVGEALKLMAEVKDSLDINVKQTFIDPLQLLQDKDLKEIGHHLRKLEGRRLDYDYKKKRVGKIPEEEIRQAVEKFEESKELAERSMFNFLENDVEQVSQLAVFVEAALDYHRQSTEILQELQNKLELRIALASQVPRRDYMPKPVNTSSTNANGVEPSSSSKLTGTDIPSDQPCCRGLYDFEPENEGELGFKEGDIITLTNQIDENWYEGMLRGESGFFPINYVEVIVPLPR.

Positions 1-21 (MSVAGLKKQFHKASQLFSEKI) are membrane-binding amphipathic helix. The 232-residue stretch at 18–249 (SEKISGAEGT…LELRIALASQ (232 aa)) folds into the BAR domain. A required for dimerization upon membrane association region spans residues 60-87 (PNPAYRAKLGMLNTMSKLRGQVKATGYP). Residues 180 to 201 (EEEIRQAVEKFEESKELAERSM) adopt a coiled-coil conformation. The tract at residues 218–254 (FVEAALDYHRQSTEILQELQNKLELRIALASQVPRRD) is interaction with ARC. Residues 255–284 (YMPKPVNTSSTNANGVEPSSSSKLTGTDIP) are disordered. A compositionally biased stretch (polar residues) spans 260–284 (VNTSSTNANGVEPSSSSKLTGTDIP). The SH3 domain maps to 285-344 (SDQPCCRGLYDFEPENEGELGFKEGDIITLTNQIDENWYEGMLRGESGFFPINYVEVIVP).

It belongs to the endophilin family. In terms of assembly, interacts with SGIP1 and DYDC1. Interacts with FASLG. Interacts with ATXN2. Interacts with BIN2. Interacts with ARC, DNM1 and SYNJ1. Expressed at high level in testis and at lower level in brain and liver.

It localises to the cytoplasm. Its subcellular location is the early endosome membrane. Functionally, implicated in endocytosis. May recruit other proteins to membranes with high curvature. This is Endophilin-A3 (Sh3gl3) from Rattus norvegicus (Rat).